A 280-amino-acid polypeptide reads, in one-letter code: MKYIGAHVSASGGVENAVLRAVEIGANAFALFTKNQRQWKALALKADTIEKFKRFCKAHQFSPEHILPHDSYLINLGNPEAENLAKSREAFIDEMERANQLGLKLLNFHPSAHLNKISESECLARIAESINIAVDKVPNVIAVIENTAGQGSNLGYRFEHLAEIIDQVEDKNRVGVCLDTCHLFSAGYDISSLESCEQTFSEFERTVGFQYLRGMHLNGSKTPLGSRVDRHHTLREGTIGTDFCKFIMQDDRFDNIPLILETIQPEIWTEEIKFLRTLAK.

The Zn(2+) site is built by H69, H109, E145, D179, H182, H216, D229, H231, and E261.

Belongs to the AP endonuclease 2 family. Zn(2+) is required as a cofactor.

The catalysed reaction is Endonucleolytic cleavage to 5'-phosphooligonucleotide end-products.. In terms of biological role, endonuclease IV plays a role in DNA repair. It cleaves phosphodiester bonds at apurinic or apyrimidinic (AP) sites, generating a 3'-hydroxyl group and a 5'-terminal sugar phosphate. The protein is Probable endonuclease 4 of Actinobacillus pleuropneumoniae serotype 5b (strain L20).